Reading from the N-terminus, the 662-residue chain is Interferon-induced GTP-binding protein Mx1 (662 aa).

Met1 is modified (N-acetylmethionine). One can recognise a Dynamin-type G domain in the interval 67–340 (DLALPAIAVI…LITHICKSLP (274 aa)). Residues 77-84 (GDQSSGKS) are G1 motif. 77 to 84 (GDQSSGKS) contributes to the GTP binding site. Residues 102–104 (VTR) form a G2 motif region. The tract at residues 178–181 (DLPG) is G3 motif. Residues 178 to 182 (DLPGI) and 247 to 250 (TKPD) each bind GTP. Residues 247–250 (TKPD) are G4 motif. The interval 279 to 282 (KCRG) is G5 motif. Positions 341-366 (LLENQIRESHQRITEELQKYGVDVPE) are bundle signaling element (BSE). The tract at residues 366–533 (EDENEKMFFL…HFQMEQIVYC (168 aa)) is middle domain. Residues 367–632 (DENEKMFFLI…KDTYSWLLKE (266 aa)) are stalk. Positions 554–557 (KKKK) are critical for lipid-binding. One can recognise a GED domain in the interval 574 to 662 (MEEIFQHLMA…ARRRLAQFPG (89 aa)).

This sequence belongs to the TRAFAC class dynamin-like GTPase superfamily. Dynamin/Fzo/YdjA family. As to quaternary structure, homooligomer. Oligomerizes into multimeric filamentous or ring-like structures by virtue of its stalk domain. Oligomerization is critical for GTPase activity, protein stability, and recognition of viral target structures. Interacts with TRPC1, TRPC3, TRPC4, TRPC5, TRPC6 and TRPC7. Interacts with HSPA5. Interacts with TUBB/TUBB5. Interacts with DDX39A and DDX39B. ISGylated.

It is found in the cytoplasm. It localises to the endoplasmic reticulum membrane. The protein resides in the perinuclear region. Interferon-induced dynamin-like GTPase with antiviral activity. The sequence is that of Interferon-induced GTP-binding protein Mx1 (MX1) from Pongo abelii (Sumatran orangutan).